A 1663-amino-acid chain; its full sequence is Cortactin-binding protein 2 (1663 aa).

5 disordered regions span residues 1–23 (MATD…AGAA), 203–222 (KKKT…RSTE), 358–440 (RQAS…LHPG), 454–479 (GNAN…PTSR), and 498–616 (RFTS…PKPS). The stretch at 119 to 276 (KKMQERMSAQ…EQLKRGSDSK (158 aa)) forms a coiled coil. A compositionally biased stretch (low complexity) spans 386–396 (PSTDSTPDPTS). Polar residues predominate over residues 411–422 (QTPGIAPQNSQA). An Asymmetric dimethylarginine modification is found at Arg-498. The segment covering 583-597 (TVASPPSSLPQGNRV) has biased composition (polar residues). 6 ANK repeats span residues 709-739 (GRPT…DINY), 743-772 (DGHS…QINA), 776-805 (NGFT…NINH), 809-838 (GGQT…NRSV), 842-871 (DGWT…PACG), and 912-942 (EGWT…EPER). Residues 1447–1477 (KKKGESGAWRKVNTSPRRKSGRFSLPTWNKP) form a disordered region. Residue Ser-1524 is modified to Phosphoserine. 2 disordered regions span residues 1581 to 1602 (QKEV…KSKT) and 1618 to 1663 (SKVT…KHNK). Over residues 1582 to 1599 (KEVSPLSSHQTTECSNSK) the composition is skewed to polar residues. Over residues 1624-1638 (SQNTKRSSSSSNTRQ) the composition is skewed to low complexity. Basic and acidic residues predominate over residues 1645–1663 (SKEENWNLHKNEHLDKHNK).

As to quaternary structure, interacts with CTTN/cortactin SH3 domain. Interacts with STRN, STRN4/zinedin and MOB4/phocein; this interactions mediate the association with the STRIPAK core complex and may regulate dendritic spine distribution of the STRIPAK complex in hippocampal neurons. Activation of glutamate receptors weakens the interaction with STRN and STRN4.

The protein resides in the cytoplasm. It is found in the cell cortex. It localises to the cell projection. Its subcellular location is the dendritic spine. Its function is as follows. Regulates the dendritic spine distribution of CTTN/cortactin in hippocampal neurons, and thus controls dendritic spinogenesis and dendritic spine maintenance. Associates with the striatin-interacting phosphatase and kinase (STRIPAK) core complex to regulate dendritic spine distribution of the STRIPAK complex in hippocampal neurons. The chain is Cortactin-binding protein 2 (CTTNBP2) from Papio anubis (Olive baboon).